We begin with the raw amino-acid sequence, 518 residues long: FAD-dependent monooxygenase tpcD (518 aa).

Residues 1 to 22 (MQLLGTLSWLYAIQASIGSSKA) form the signal peptide. Residue Asn61 is glycosylated (N-linked (GlcNAc...) asparagine). The 172-residue stretch at 75–246 (QSAQPACLVH…TRFDLDVFQQ (172 aa)) folds into the FAD-binding PCMH-type domain. At His112 the chain carries Pros-8alpha-FAD histidine. N-linked (GlcNAc...) asparagine glycosylation is found at Asn163, Asn208, Asn216, and Asn346.

The protein belongs to the oxygen-dependent FAD-linked oxidoreductase family. The cofactor is FAD.

It functions in the pathway secondary metabolite biosynthesis; terpenoid biosynthesis. Functionally, FAD-dependent monooxygenase; part of the gene cluster that mediates the biosynthesis of terpestacin. The bifunctional terpene synthase tpcA converts isopentenyl diphosphate (IPP) and dimethylallyl diphosphate (DMAPP) into the sesterterpene preterpestacin I. The C-terminal prenyltransferase (PT) domain of tpcA catalyzes formation of GFPP, whereas the N-terminal terpene cyclase (TC) domain catalyzes the cyclization of GFPP into preterpestacin I. The cytochrome P450 monooxygenase tpcB then hydroxylates preterpestacin I to yield 24-hydroxypreterpstacin I (renamed as preterpestacin II) whereas the cytochrome P450 monooxygenase tpcC further hydroxylates preterpestacin II to yield 16,17-dihydroxypreterpestacin II (renamed as preterpestacin III). Finally, the FAD-dependent monooxygenase tpcD converts preterpestacin III into terpestacin. This Cochliobolus heterostrophus (strain C5 / ATCC 48332 / race O) (Southern corn leaf blight fungus) protein is FAD-dependent monooxygenase tpcD.